Reading from the N-terminus, the 100-residue chain is Large ribosomal subunit protein uL23 (100 aa).

The protein belongs to the universal ribosomal protein uL23 family. In terms of assembly, part of the 50S ribosomal subunit. Contacts protein L29, and trigger factor when it is bound to the ribosome.

Its function is as follows. One of the early assembly proteins it binds 23S rRNA. One of the proteins that surrounds the polypeptide exit tunnel on the outside of the ribosome. Forms the main docking site for trigger factor binding to the ribosome. The polypeptide is Large ribosomal subunit protein uL23 (Pectobacterium atrosepticum (strain SCRI 1043 / ATCC BAA-672) (Erwinia carotovora subsp. atroseptica)).